Reading from the N-terminus, the 377-residue chain is Acetylornithine aminotransferase (377 aa).

Pyridoxal 5'-phosphate-binding positions include 94-95 (GT) and F121. R124 lines the N(2)-acetyl-L-ornithine pocket. 206-209 (DEIQ) serves as a coordination point for pyridoxal 5'-phosphate. Position 235 is an N6-(pyridoxal phosphate)lysine (K235). Residue S263 participates in N(2)-acetyl-L-ornithine binding. Residue T264 participates in pyridoxal 5'-phosphate binding.

This sequence belongs to the class-III pyridoxal-phosphate-dependent aminotransferase family. ArgD subfamily. In terms of assembly, homodimer. The cofactor is pyridoxal 5'-phosphate.

The protein localises to the cytoplasm. It carries out the reaction N(2)-acetyl-L-ornithine + 2-oxoglutarate = N-acetyl-L-glutamate 5-semialdehyde + L-glutamate. It functions in the pathway amino-acid biosynthesis; L-arginine biosynthesis; N(2)-acetyl-L-ornithine from L-glutamate: step 4/4. The protein is Acetylornithine aminotransferase of Lactococcus lactis subsp. lactis (strain IL1403) (Streptococcus lactis).